Here is a 370-residue protein sequence, read N- to C-terminus: Ubiquinone biosynthesis O-methyltransferase, mitochondrial (370 aa).

Residues 1–86 (MWGGSKLSSS…SYRLPWTRPY (86 aa)) constitute a mitochondrion transit peptide. Arginine 125 is an S-adenosyl-L-methionine binding site. Lysine 144 and lysine 150 each carry N6-acetyllysine. Residues glycine 155 and aspartate 176 each coordinate S-adenosyl-L-methionine. Lysine 197 carries the post-translational modification N6-acetyllysine. Serine 223 is a binding site for S-adenosyl-L-methionine. The Mg(2+) site is built by glutamate 224, glutamate 227, and histidine 228.

The protein belongs to the class I-like SAM-binding methyltransferase superfamily. UbiG/COQ3 family. In terms of assembly, component of a multi-subunit COQ enzyme complex, composed of at least COQ3, COQ4, COQ5, COQ6, COQ7 and COQ9. Requires Mg(2+) as cofactor.

The protein localises to the mitochondrion inner membrane. The catalysed reaction is 3,4-dihydroxy-5-(all-trans-decaprenyl)benzoate + S-adenosyl-L-methionine = 4-hydroxy-3-methoxy-5-(all-trans-decaprenyl)benzoate + S-adenosyl-L-homocysteine + H(+). It carries out the reaction a 3-demethylubiquinone + S-adenosyl-L-methionine = a ubiquinone + S-adenosyl-L-homocysteine. It catalyses the reaction 3-demethylubiquinol-10 + S-adenosyl-L-methionine = ubiquinol-10 + S-adenosyl-L-homocysteine + H(+). It participates in cofactor biosynthesis; ubiquinone biosynthesis. Its function is as follows. O-methyltransferase required for two non-consecutive steps during ubiquinone biosynthesis. Catalyzes the 2 O-methylation of 3,4-dihydroxy-5-(all-trans-decaprenyl)benzoic acid into 4-hydroxy-3-methoxy-5-(all-trans-decaprenyl)benzoic acid. Also catalyzes the last step of ubiquinone biosynthesis by mediating methylation of 3-demethylubiquinone into ubiquinone. Also able to mediate the methylation of 3-demethylubiquinol-10 into ubiquinol-10. The polypeptide is Ubiquinone biosynthesis O-methyltransferase, mitochondrial (Bos taurus (Bovine)).